We begin with the raw amino-acid sequence, 320 residues long: tRNA uridine(34) hydroxylase (320 aa).

In terms of domain architecture, Rhodanese spans 125-221 (KEKRPLLLDV…YGLKQGSEHW (97 aa)). The Cysteine persulfide intermediate role is filled by Cys181.

It belongs to the TrhO family.

It catalyses the reaction uridine(34) in tRNA + AH2 + O2 = 5-hydroxyuridine(34) in tRNA + A + H2O. In terms of biological role, catalyzes oxygen-dependent 5-hydroxyuridine (ho5U) modification at position 34 in tRNAs. In Protochlamydia amoebophila (strain UWE25), this protein is tRNA uridine(34) hydroxylase.